Reading from the N-terminus, the 284-residue chain is Origin of replication complex subunit 6 (284 aa).

This sequence belongs to the ORC6 family. Component of the origin recognition complex (ORC) composed of at least ORC1 (ORC1A or ORC1B), ORC2, ORC3, ORC4, ORC5 and ORC6. ORC is regulated in a cell-cycle and development dependent manner. It is sequentially assembled at the exit from anaphase of mitosis and disassembled as cells enter S phase. Interacts directly with ORC2, ORC3, ORC4 and ORC5. As to expression, follow a cell-cycle regulation with a peak at the G1/S-phase. Mostly expressed in siliques, flowers, flower buds and mature leaves, and, to a lower exent, in roots, leaves and stems.

The protein localises to the nucleus. Functionally, component of the origin recognition complex (ORC) that binds origins of replication. DNA-binding is ATP-dependent. The specific DNA sequences that define origins of replication have not been identified yet. ORC is required to assemble the pre-replication complex necessary to initiate DNA replication. This is Origin of replication complex subunit 6 from Arabidopsis thaliana (Mouse-ear cress).